The primary structure comprises 480 residues: Aspartyl/glutamyl-tRNA(Asn/Gln) amidotransferase subunit B (480 aa).

It belongs to the GatB/GatE family. GatB subfamily. In terms of assembly, heterotrimer of A, B and C subunits.

The enzyme catalyses L-glutamyl-tRNA(Gln) + L-glutamine + ATP + H2O = L-glutaminyl-tRNA(Gln) + L-glutamate + ADP + phosphate + H(+). It catalyses the reaction L-aspartyl-tRNA(Asn) + L-glutamine + ATP + H2O = L-asparaginyl-tRNA(Asn) + L-glutamate + ADP + phosphate + 2 H(+). Its function is as follows. Allows the formation of correctly charged Asn-tRNA(Asn) or Gln-tRNA(Gln) through the transamidation of misacylated Asp-tRNA(Asn) or Glu-tRNA(Gln) in organisms which lack either or both of asparaginyl-tRNA or glutaminyl-tRNA synthetases. The reaction takes place in the presence of glutamine and ATP through an activated phospho-Asp-tRNA(Asn) or phospho-Glu-tRNA(Gln). The polypeptide is Aspartyl/glutamyl-tRNA(Asn/Gln) amidotransferase subunit B (Hahella chejuensis (strain KCTC 2396)).